A 115-amino-acid chain; its full sequence is uncharacterized protein (115 aa).

This is an uncharacterized protein from Human herpesvirus 6A (strain Uganda-1102) (HHV-6 variant A).